A 193-amino-acid polypeptide reads, in one-letter code: Ribosomal RNA large subunit methyltransferase E (193 aa).

The S-adenosyl-L-methionine site is built by G48, F50, D67, N85, and D107. The Proton acceptor role is filled by K147.

It belongs to the class I-like SAM-binding methyltransferase superfamily. RNA methyltransferase RlmE family.

It localises to the cytoplasm. It catalyses the reaction uridine(2552) in 23S rRNA + S-adenosyl-L-methionine = 2'-O-methyluridine(2552) in 23S rRNA + S-adenosyl-L-homocysteine + H(+). Its function is as follows. Specifically methylates the uridine in position 2552 of 23S rRNA at the 2'-O position of the ribose in the fully assembled 50S ribosomal subunit. This Borrelia duttonii (strain Ly) protein is Ribosomal RNA large subunit methyltransferase E.